The primary structure comprises 296 residues: Small ribosomal subunit protein uS2 (296 aa).

Disordered regions lie at residues 1–24 (MNTK…TQSQ) and 270–296 (HELK…EASQ).

Belongs to the universal ribosomal protein uS2 family.

The protein is Small ribosomal subunit protein uS2 of Mycoplasmopsis synoviae (strain 53) (Mycoplasma synoviae).